The chain runs to 72 residues: uncharacterized protein (72 aa).

The protein resides in the plastid. It is found in the chloroplast. This is an uncharacterized protein from Oenothera berteroana (Bertero's evening primrose).